Reading from the N-terminus, the 336-residue chain is Tetraacyldisaccharide 4'-kinase (336 aa).

60 to 67 (TVGGTGKT) serves as a coordination point for ATP.

Belongs to the LpxK family.

The enzyme catalyses a lipid A disaccharide + ATP = a lipid IVA + ADP + H(+). It participates in glycolipid biosynthesis; lipid IV(A) biosynthesis; lipid IV(A) from (3R)-3-hydroxytetradecanoyl-[acyl-carrier-protein] and UDP-N-acetyl-alpha-D-glucosamine: step 6/6. Transfers the gamma-phosphate of ATP to the 4'-position of a tetraacyldisaccharide 1-phosphate intermediate (termed DS-1-P) to form tetraacyldisaccharide 1,4'-bis-phosphate (lipid IVA). In Pseudomonas entomophila (strain L48), this protein is Tetraacyldisaccharide 4'-kinase.